Consider the following 207-residue polypeptide: Ribosomal RNA small subunit methyltransferase G (207 aa).

S-adenosyl-L-methionine-binding positions include Gly-74, Leu-79, 125 to 126 (VE), and Arg-140.

Belongs to the methyltransferase superfamily. RNA methyltransferase RsmG family.

The protein resides in the cytoplasm. It carries out the reaction guanosine(527) in 16S rRNA + S-adenosyl-L-methionine = N(7)-methylguanosine(527) in 16S rRNA + S-adenosyl-L-homocysteine. Its function is as follows. Specifically methylates the N7 position of guanine in position 527 of 16S rRNA. The polypeptide is Ribosomal RNA small subunit methyltransferase G (Shewanella pealeana (strain ATCC 700345 / ANG-SQ1)).